Reading from the N-terminus, the 137-residue chain is uncharacterized protein (137 aa).

A helical membrane pass occupies residues 4-21 (ISWQIVLAVIGVVAGFII).

It is found in the membrane. This is an uncharacterized protein from Archaeoglobus fulgidus (strain ATCC 49558 / DSM 4304 / JCM 9628 / NBRC 100126 / VC-16).